The primary structure comprises 78 residues: uncharacterized protein (78 aa).

Transmembrane regions (helical) follow at residues 13 to 35 (AGVG…PTGI) and 50 to 72 (GTTF…FYYF).

Its subcellular location is the cell membrane. This is an uncharacterized protein from Pasteurella multocida (strain Pm70).